Reading from the N-terminus, the 215-residue chain is Cytochrome b6 (215 aa).

The chain crosses the membrane as a helical span at residues 32–52 (IFYCFGGLVLTCFLIQVATGF). C35 is a binding site for heme c. Heme b contacts are provided by H86 and H100. 3 helical membrane passes run 90 to 110 (ASMM…TGGF), 116 to 136 (LTWV…VTGY), and 186 to 206 (AHTF…FLMI). Heme b is bound by residues H187 and H202.

This sequence belongs to the cytochrome b family. PetB subfamily. In terms of assembly, the 4 large subunits of the cytochrome b6-f complex are cytochrome b6, subunit IV (17 kDa polypeptide, PetD), cytochrome f and the Rieske protein, while the 4 small subunits are PetG, PetL, PetM and PetN. The complex functions as a dimer. Requires heme b as cofactor. Heme c is required as a cofactor.

The protein resides in the plastid. The protein localises to the chloroplast thylakoid membrane. In terms of biological role, component of the cytochrome b6-f complex, which mediates electron transfer between photosystem II (PSII) and photosystem I (PSI), cyclic electron flow around PSI, and state transitions. The protein is Cytochrome b6 of Phaeodactylum tricornutum (strain CCAP 1055/1).